The chain runs to 2648 residues: E3 ubiquitin-protein ligase hecd-1 (2648 aa).

2 ANK repeats span residues 374-403 (VGQSLTNWASAFGSIEMVQYLCDKGSDVNK) and 405-434 (HKSSSLHYAACFGRPDVVKLLLQRGANPDL). A compositionally biased stretch (basic and acidic residues) spans 433–455 (DLRDEDGKTALDKARERSDDDHN). Disordered stretches follow at residues 433 to 494 (DLRD…ELPN), 645 to 714 (PMEI…KATA), and 1376 to 1400 (DPPKKDSPAGTSSTPGSSSSAALPP). Polar residues-rich tracts occupy residues 478-489 (ASTSKQPGTSTK), 652-661 (NQPSSSTAVP), and 670-688 (TVPSSSGGADAESNSNPST). Low complexity-rich tracts occupy residues 696-714 (SSTPSSSTQQSISKPKATA) and 1383-1400 (PAGTSSTPGSSSSAALPP). The MIB/HERC2 domain occupies 1438-1510 (RSRGSYKISE…NFDIERVTST (73 aa)). Disordered regions lie at residues 1538–1562 (YTPKTTGGPPSSSVFGTSSSAGSSR), 1575–1629 (KNTT…SLQH), 1652–1796 (NQEP…LLGG), and 1811–1836 (ESLSDASSSAKDATTNEAQKKGGKKP). Low complexity-rich tracts occupy residues 1543–1562 (TGGPPSSSVFGTSSSAGSSR) and 1575–1586 (KNTTPAGTPSSG). Polar residues predominate over residues 1610–1629 (TSGPSVASTGQAASAESLQH). Residues 1653–1666 (QEPEDEPMGGEESD) show a composition bias toward acidic residues. Positions 1667–1696 (SAASMRSAASSNSQMSMGSSSQQQQQQDSD) are enriched in low complexity. Composition is skewed to acidic residues over residues 1736–1746 (TDGDADADETN) and 1756–1783 (DAMEEDDEEEETMEDEEDDDDDDDDESS). The segment covering 1812–1823 (SLSDASSSAKDA) has biased composition (low complexity). The 409-residue stretch at 2240 to 2648 (FHADRKAVLE…AINEKGFHLN (409 aa)) folds into the HECT domain. Catalysis depends on C2617, which acts as the Glycyl thioester intermediate.

The protein belongs to the UPL family. K-HECT subfamily. Expressed in most tissues, including hypodermis, muscle, intestine, vulva, and neurons.

The catalysed reaction is S-ubiquitinyl-[E2 ubiquitin-conjugating enzyme]-L-cysteine + [acceptor protein]-L-lysine = [E2 ubiquitin-conjugating enzyme]-L-cysteine + N(6)-ubiquitinyl-[acceptor protein]-L-lysine.. The protein operates within protein modification; protein ubiquitination. In terms of biological role, E3 ubiquitin-protein ligase which accepts ubiquitin from an E2 ubiquitin-conjugating enzyme in the form of a thioester and then directly transfers the ubiquitin to targeted substrates. Involved in the ubiquitination and proteasomal-mediated degradation of cytoplasmic and mitochondrial proteins. Positively regulates lin-12 activity in the anchor cell (AC)/vulval precursor (VU) cell fate decision. Negatively regulates glp-1 activity in germline proliferation. May play a role in the formation of fibrous organelles, a hemidesmosome-like structure attaching muscles to the epidermis. Regulates germline DNA double-strand-break repair and apoptosis in response to DNA damage by recruiting E4 ubiquitin-protein ligase ufd-2 to DNA repair foci. The polypeptide is E3 ubiquitin-protein ligase hecd-1 (Caenorhabditis elegans).